Consider the following 222-residue polypeptide: C-8 sterol isomerase ERG2 (222 aa).

Residues 3 to 23 (FFPLLLLIGVVGYIMNVLFTT) traverse the membrane as a helical segment.

This sequence belongs to the ERG2 family.

Its subcellular location is the endoplasmic reticulum membrane. The enzyme catalyses fecosterol = episterol. The protein operates within steroid metabolism; ergosterol biosynthesis; ergosterol from zymosterol: step 2/5. With respect to regulation, catalytic activity is inhibited by the morphilines tridemorph, fenpropimorph, and fenpropidin. Functionally, C-8 sterol isomerase; part of the third module of ergosterol biosynthesis pathway that includes the late steps of the pathway. ERG2 catalyzes the reaction which results in unsaturation at C-7 in the B ring of sterols and thus converts fecosterol to episterol. The third module or late pathway involves the ergosterol synthesis itself through consecutive reactions that mainly occur in the endoplasmic reticulum (ER) membrane. Firstly, the squalene synthase ERG9 catalyzes the condensation of 2 farnesyl pyrophosphate moieties to form squalene, which is the precursor of all steroids. Squalene synthase is crucial for balancing the incorporation of farnesyl diphosphate (FPP) into sterol and nonsterol isoprene synthesis. Secondly, the squalene epoxidase ERG1 catalyzes the stereospecific oxidation of squalene to (S)-2,3-epoxysqualene, which is considered to be a rate-limiting enzyme in steroid biosynthesis. Then, the lanosterol synthase ERG7 catalyzes the cyclization of (S)-2,3 oxidosqualene to lanosterol, a reaction that forms the sterol core. In the next steps, lanosterol is transformed to zymosterol through a complex process involving various demethylation, reduction and desaturation reactions. The lanosterol 14-alpha-demethylase ERG11 (also known as CYP51) catalyzes C14-demethylation of lanosterol to produce 4,4'-dimethyl cholesta-8,14,24-triene-3-beta-ol, which is critical for ergosterol biosynthesis. The C-14 reductase ERG24 reduces the C14=C15 double bond of 4,4-dimethyl-cholesta-8,14,24-trienol to produce 4,4-dimethyl-cholesta-8,24-dienol. 4,4-dimethyl-cholesta-8,24-dienol is substrate of the C-4 demethylation complex ERG25-ERG26-ERG27 in which ERG25 catalyzes the three-step monooxygenation required for the demethylation of 4,4-dimethyl and 4alpha-methylsterols, ERG26 catalyzes the oxidative decarboxylation that results in a reduction of the 3-beta-hydroxy group at the C-3 carbon to an oxo group, and ERG27 is responsible for the reduction of the keto group on the C-3. ERG28 has a role as a scaffold to help anchor ERG25, ERG26 and ERG27 to the endoplasmic reticulum and ERG29 regulates the activity of the iron-containing C4-methylsterol oxidase ERG25. Then, the sterol 24-C-methyltransferase ERG6 catalyzes the methyl transfer from S-adenosyl-methionine to the C-24 of zymosterol to form fecosterol. The C-8 sterol isomerase ERG2 catalyzes the reaction which results in unsaturation at C-7 in the B ring of sterols and thus converts fecosterol to episterol. The sterol-C5-desaturase ERG3 then catalyzes the introduction of a C-5 double bond in the B ring to produce 5-dehydroepisterol. The C-22 sterol desaturase ERG5 further converts 5-dehydroepisterol into ergosta-5,7,22,24(28)-tetraen-3beta-ol by forming the C-22(23) double bond in the sterol side chain. Finally, ergosta-5,7,22,24(28)-tetraen-3beta-ol is substrate of the C-24(28) sterol reductase ERG4 to produce ergosterol. The chain is C-8 sterol isomerase ERG2 from Saccharomyces cerevisiae (strain ATCC 204508 / S288c) (Baker's yeast).